A 142-amino-acid polypeptide reads, in one-letter code: Small ribosomal subunit protein uS9 (142 aa).

This sequence belongs to the universal ribosomal protein uS9 family.

The protein resides in the cytoplasm. The chain is Small ribosomal subunit protein uS9 (RPS16) from Syntrichia ruralis (Great hairy screw-moss).